Here is a 223-residue protein sequence, read N- to C-terminus: MGQKVHPTGIRLGIVKDWNSKWYADSGQFSELLNNDLAVRSYLAKKLSHALVSNIQIDRPARNARITIHTARPGIVIGKKGEDINNLRQEVSRMMGIPVHINIQEIRKPELDATLVAANVAQQLERRIMFRRAMKRAVTNAMRVGAQGIRIKVSGRLNGAEIARNEWYREGRVPLHTLRADIDYGFAEAKTTYGILGVKVWIFKGEVFEQPEPQVAAGSSAIS.

The 69-residue stretch at V39–R107 folds into the KH type-2 domain.

The protein belongs to the universal ribosomal protein uS3 family. In terms of assembly, part of the 30S ribosomal subunit. Forms a tight complex with proteins S10 and S14.

Binds the lower part of the 30S subunit head. Binds mRNA in the 70S ribosome, positioning it for translation. This chain is Small ribosomal subunit protein uS3, found in Nitrosococcus oceani (strain ATCC 19707 / BCRC 17464 / JCM 30415 / NCIMB 11848 / C-107).